The primary structure comprises 194 residues: Lysozyme g-like protein 1 (194 aa).

Positions 1 to 19 (MSALWLLLGLLALMDLSES) are cleaved as a signal peptide. Disulfide bonds link Cys24/Cys80 and Cys38/Cys49.

It belongs to the glycosyl hydrolase 23 family.

It localises to the secreted. The protein is Lysozyme g-like protein 1 (LYG1) of Homo sapiens (Human).